The primary structure comprises 67 residues: Coiled-coil domain-containing protein 179 (67 aa).

Disordered regions lie at residues 1–32 (MCLR…RQSV) and 47–67 (RKLG…ILWT). Residues 27–53 (STRQSVEKRINYMQNLQKEKRKLGKRF) are a coiled coil.

The protein is Coiled-coil domain-containing protein 179 (Ccdc179) of Mus musculus (Mouse).